The chain runs to 500 residues: L-arabinose isomerase (500 aa).

4 residues coordinate Mn(2+): Glu-306, Glu-333, His-350, and His-450.

Belongs to the arabinose isomerase family. As to quaternary structure, homohexamer. The cofactor is Mn(2+).

It catalyses the reaction beta-L-arabinopyranose = L-ribulose. The protein operates within carbohydrate degradation; L-arabinose degradation via L-ribulose; D-xylulose 5-phosphate from L-arabinose (bacterial route): step 1/3. In terms of biological role, catalyzes the conversion of L-arabinose to L-ribulose. The protein is L-arabinose isomerase of Shigella flexneri serotype 5b (strain 8401).